We begin with the raw amino-acid sequence, 302 residues long: Protoheme IX farnesyltransferase (302 aa).

The next 9 membrane-spanning stretches (helical) occupy residues 26-46, 48-68, 98-118, 120-140, 148-168, 174-194, 221-241, 244-264, and 280-300; these read VVVL…PGQV, WVAL…AAAL, VLGF…LWIN, LTAA…TLYL, IVIG…AVTG, ALLL…ALAV, ILLY…TFMG, LYLA…VRLL, and IIYL…PVWL.

This sequence belongs to the UbiA prenyltransferase family. Protoheme IX farnesyltransferase subfamily.

It localises to the cell inner membrane. The catalysed reaction is heme b + (2E,6E)-farnesyl diphosphate + H2O = Fe(II)-heme o + diphosphate. It participates in porphyrin-containing compound metabolism; heme O biosynthesis; heme O from protoheme: step 1/1. Its function is as follows. Converts heme B (protoheme IX) to heme O by substitution of the vinyl group on carbon 2 of heme B porphyrin ring with a hydroxyethyl farnesyl side group. In Alkalilimnicola ehrlichii (strain ATCC BAA-1101 / DSM 17681 / MLHE-1), this protein is Protoheme IX farnesyltransferase.